The chain runs to 215 residues: CASP-like protein 1E1 (215 aa).

The Cytoplasmic segment spans residues 1–51 (MESSRGKPGLNGSGGGAAAFDYSSRRGYYTGAGAALPPLAAGSRAPPVDPC). Residues 52-72 (CVALRVFVLLGTLASAVVMAA) form a helical membrane-spanning segment. Residues 73-103 (DRQSTTVQIAAGEQLAPPLRVPVTAKWTYSS) lie on the Extracellular side of the membrane. The chain crosses the membrane as a helical span at residues 104 to 124 (AFVYFVVANAMVFAFSAAALA). Over 125–130 (AVRRRS) the chain is Cytoplasmic. Residues 131 to 151 (AVVPVMVGDLVAMALLFSAVG) traverse the membrane as a helical segment. Topologically, residues 152–185 (AAAQFGLLGERGNAHVRWAKVCDVYGPFCERAMA) are extracellular. Residues 186-206 (AVVVALIAAFADLVLLMLTIL) form a helical membrane-spanning segment. The Cytoplasmic segment spans residues 207-215 (TIHKASSYY).

The protein belongs to the Casparian strip membrane proteins (CASP) family. As to quaternary structure, homodimer and heterodimers.

It is found in the cell membrane. This is CASP-like protein 1E1 from Oryza sativa subsp. indica (Rice).